Reading from the N-terminus, the 304-residue chain is Ribosomal RNA small subunit methyltransferase H (304 aa).

S-adenosyl-L-methionine is bound by residues 47-49 (GGH), Asp-66, Phe-93, Asp-108, and Gln-115.

It belongs to the methyltransferase superfamily. RsmH family.

The protein resides in the cytoplasm. It carries out the reaction cytidine(1402) in 16S rRNA + S-adenosyl-L-methionine = N(4)-methylcytidine(1402) in 16S rRNA + S-adenosyl-L-homocysteine + H(+). In terms of biological role, specifically methylates the N4 position of cytidine in position 1402 (C1402) of 16S rRNA. The polypeptide is Ribosomal RNA small subunit methyltransferase H (Prochlorococcus marinus (strain NATL2A)).